We begin with the raw amino-acid sequence, 179 residues long: Endoribonuclease YbeY (179 aa).

Zn(2+) contacts are provided by His148, His152, and His158.

This sequence belongs to the endoribonuclease YbeY family. Zn(2+) is required as a cofactor.

It is found in the cytoplasm. Its function is as follows. Single strand-specific metallo-endoribonuclease involved in late-stage 70S ribosome quality control and in maturation of the 3' terminus of the 16S rRNA. The chain is Endoribonuclease YbeY from Prochlorococcus marinus (strain MIT 9312).